The chain runs to 178 residues: Photosystem I assembly protein Ycf4 (178 aa).

2 consecutive transmembrane segments (helical) span residues 19–39 (ILVA…SLSS) and 61–81 (LIMG…WAVI).

The protein belongs to the Ycf4 family.

It is found in the cellular thylakoid membrane. Functionally, seems to be required for the assembly of the photosystem I complex. This chain is Photosystem I assembly protein Ycf4, found in Synechococcus sp. (strain CC9311).